The chain runs to 227 residues: Cytochrome c oxidase subunit 2 (227 aa).

Topologically, residues 1 to 14 (MAYPMQLGFQDATS) are mitochondrial intermembrane. The chain crosses the membrane as a helical span at residues 15-45 (PIMEELLHFHDHTLMIVFLISSLVLYIISLM). Topologically, residues 46-59 (LTTKLTHTSTMDAQ) are mitochondrial matrix. Residues 60 to 87 (EVETVWTILPAIILILIALPSLRILYMM) form a helical membrane-spanning segment. At 88–227 (DEINNPSLTV…HFEEWSASMS (140 aa)) the chain is on the mitochondrial intermembrane side. 6 residues coordinate Cu cation: His-161, Cys-196, Glu-198, Cys-200, His-204, and Met-207. Glu-198 contributes to the Mg(2+) binding site.

The protein belongs to the cytochrome c oxidase subunit 2 family. In terms of assembly, component of the cytochrome c oxidase (complex IV, CIV), a multisubunit enzyme composed of 14 subunits. The complex is composed of a catalytic core of 3 subunits MT-CO1, MT-CO2 and MT-CO3, encoded in the mitochondrial DNA, and 11 supernumerary subunits COX4I, COX5A, COX5B, COX6A, COX6B, COX6C, COX7A, COX7B, COX7C, COX8 and NDUFA4, which are encoded in the nuclear genome. The complex exists as a monomer or a dimer and forms supercomplexes (SCs) in the inner mitochondrial membrane with NADH-ubiquinone oxidoreductase (complex I, CI) and ubiquinol-cytochrome c oxidoreductase (cytochrome b-c1 complex, complex III, CIII), resulting in different assemblies (supercomplex SCI(1)III(2)IV(1) and megacomplex MCI(2)III(2)IV(2)). Found in a complex with TMEM177, COA6, COX18, COX20, SCO1 and SCO2. Interacts with TMEM177 in a COX20-dependent manner. Interacts with COX20. Interacts with COX16. The cofactor is Cu cation.

It localises to the mitochondrion inner membrane. The catalysed reaction is 4 Fe(II)-[cytochrome c] + O2 + 8 H(+)(in) = 4 Fe(III)-[cytochrome c] + 2 H2O + 4 H(+)(out). Functionally, component of the cytochrome c oxidase, the last enzyme in the mitochondrial electron transport chain which drives oxidative phosphorylation. The respiratory chain contains 3 multisubunit complexes succinate dehydrogenase (complex II, CII), ubiquinol-cytochrome c oxidoreductase (cytochrome b-c1 complex, complex III, CIII) and cytochrome c oxidase (complex IV, CIV), that cooperate to transfer electrons derived from NADH and succinate to molecular oxygen, creating an electrochemical gradient over the inner membrane that drives transmembrane transport and the ATP synthase. Cytochrome c oxidase is the component of the respiratory chain that catalyzes the reduction of oxygen to water. Electrons originating from reduced cytochrome c in the intermembrane space (IMS) are transferred via the dinuclear copper A center (CU(A)) of subunit 2 and heme A of subunit 1 to the active site in subunit 1, a binuclear center (BNC) formed by heme A3 and copper B (CU(B)). The BNC reduces molecular oxygen to 2 water molecules using 4 electrons from cytochrome c in the IMS and 4 protons from the mitochondrial matrix. The sequence is that of Cytochrome c oxidase subunit 2 (MT-CO2) from Antilocapra americana (Pronghorn).